The chain runs to 45 residues: Putative potassium channel blocker (45 aa).

Expressed by the venom gland.

It localises to the secreted. In terms of biological role, inhibits potassium channels. The chain is Putative potassium channel blocker from Hottentotta tamulus (Eastern Indian scorpion).